The chain runs to 367 residues: MAKLSLRNVQKTYAGGTQVVHGIDMEIADGEFIVIVGPSGCGKSTLLRMVAGLETITGGEIHIGDKVVNDLEPAARDIAMVFQNYALYPHMSVYDNMAYGLKIRGMSKGEIEQRVKHAAGILELASLLDRKPRALSGGQRQRVAMGRAIVREPSVFLFDEPLSNLDAKLRVQMRLELKDLHRRLKTTSLYVTHDQVEAMTLADRMMVLNGGRVEQIGTPLEVYARPASTFVAGFIGSPPMNLVPVARNGSGQGVAQMRVQPKDGQAAATLGHLPMGLHLPEQALMGLRPEHIEPCAVHEAIAELDVRVVEALGADSFAYGSLGGQPIVVRLDSQTQVRAGDKLPITASAEHLHFFDVQSGKRIEAQA.

The 232-residue stretch at 4–235 (LSLRNVQKTY…PASTFVAGFI (232 aa)) folds into the ABC transporter domain. 37–44 (GPSGCGKS) contributes to the ATP binding site.

The protein belongs to the ABC transporter superfamily. sn-glycerol-3-phosphate importer (TC 3.A.1.1.3) family. The complex is composed of two ATP-binding proteins (UgpC), two transmembrane proteins (UgpA and UgpE) and a solute-binding protein (UgpB).

Its subcellular location is the cell inner membrane. It catalyses the reaction sn-glycerol 3-phosphate(out) + ATP + H2O = sn-glycerol 3-phosphate(in) + ADP + phosphate + H(+). Functionally, part of the ABC transporter complex UgpBAEC involved in sn-glycerol-3-phosphate (G3P) import. Responsible for energy coupling to the transport system. This is sn-glycerol-3-phosphate import ATP-binding protein UgpC from Cupriavidus metallidurans (strain ATCC 43123 / DSM 2839 / NBRC 102507 / CH34) (Ralstonia metallidurans).